Consider the following 97-residue polypeptide: MTSSPVSRVVYNGKRNSSPRSPTNSSEIFTPAHEENVRFIYEAWQGVERDLRSQLSSGERCLVEEYVEKVPNPSLKTFKPIDLSDLKRRNTQDAKKS.

The segment at 1–29 is disordered; it reads MTSSPVSRVVYNGKRNSSPRSPTNSSEIF. Low complexity predominate over residues 15–26; that stretch reads RNSSPRSPTNSS. Position 21 is a phosphoserine (Ser21). Thr30 is subject to Phosphothreonine. Residue Tyr41 is modified to Phosphotyrosine. Lys79 carries the N6-acetyllysine modification. Positions 80 to 84 match the PXDLS motif motif; it reads PIDLS.

The protein belongs to the MCRIP family. In terms of assembly, interacts (unphosphorylated form, via the PXDLS motif) with CTBP1, competitively inhibiting CTBP-ZEB1 interaction. Interacts with CTBP2. Interacts with MCRIP2. Interacts with DDX6. In terms of processing, phosphorylation by MAPK3/1 (ERK1/2) regulates MCRIP1 binding to CTBP(s). Widely expressed (at protein level).

It is found in the nucleus. The protein resides in the cytoplasm. The protein localises to the stress granule. In terms of biological role, the phosphorylation status of MCRIP1 functions as a molecular switch to regulate epithelial-mesenchymal transition. Unphosphorylated MCRIP1 binds to and inhibits the transcriptional corepressor CTBP(s). When phosphorylated by MAPK/ERK, MCRIP1 releases CTBP(s) resulting in transcriptional silencing of the E-cadherin gene and induction of epithelial-mesenchymal transition. This is Mapk-regulated corepressor-interacting protein 1 (Mcrip1) from Mus musculus (Mouse).